A 334-amino-acid polypeptide reads, in one-letter code: Ornithine carbamoyltransferase (334 aa).

Carbamoyl phosphate is bound by residues 56-59 (STRT), Gln83, Arg107, and 134-137 (HPTQ). Residues Asn168, Asp232, and 236 to 237 (SM) each bind L-ornithine. Residues 274–275 (CL) and Arg320 contribute to the carbamoyl phosphate site.

This sequence belongs to the aspartate/ornithine carbamoyltransferase superfamily. OTCase family. In terms of assembly, homotrimer.

The protein localises to the cytoplasm. The catalysed reaction is carbamoyl phosphate + L-ornithine = L-citrulline + phosphate + H(+). It functions in the pathway amino-acid biosynthesis; L-arginine biosynthesis; L-arginine from L-ornithine and carbamoyl phosphate: step 1/3. Its function is as follows. Reversibly catalyzes the transfer of the carbamoyl group from carbamoyl phosphate (CP) to the N(epsilon) atom of ornithine (ORN) to produce L-citrulline. The sequence is that of Ornithine carbamoyltransferase (argI) from Salmonella typhimurium (strain LT2 / SGSC1412 / ATCC 700720).